The chain runs to 302 residues: Glycine--tRNA ligase alpha subunit (302 aa).

Belongs to the class-II aminoacyl-tRNA synthetase family. As to quaternary structure, tetramer of two alpha and two beta subunits.

It localises to the cytoplasm. It catalyses the reaction tRNA(Gly) + glycine + ATP = glycyl-tRNA(Gly) + AMP + diphosphate. This chain is Glycine--tRNA ligase alpha subunit, found in Haemophilus influenzae (strain 86-028NP).